Reading from the N-terminus, the 369-residue chain is Histidinol-phosphate aminotransferase 2 (369 aa).

Lys227 is modified (N6-(pyridoxal phosphate)lysine).

It belongs to the class-II pyridoxal-phosphate-dependent aminotransferase family. Histidinol-phosphate aminotransferase subfamily. In terms of assembly, homodimer. The cofactor is pyridoxal 5'-phosphate.

It catalyses the reaction L-histidinol phosphate + 2-oxoglutarate = 3-(imidazol-4-yl)-2-oxopropyl phosphate + L-glutamate. Its pathway is amino-acid biosynthesis; L-histidine biosynthesis; L-histidine from 5-phospho-alpha-D-ribose 1-diphosphate: step 7/9. The sequence is that of Histidinol-phosphate aminotransferase 2 (hisC2) from Mesorhizobium japonicum (strain LMG 29417 / CECT 9101 / MAFF 303099) (Mesorhizobium loti (strain MAFF 303099)).